Consider the following 371-residue polypeptide: Probable beta-1,3-galactosyltransferase 12 (371 aa).

The tract at residues 1–36 (MPLFSHRFTTASSSSPASPSYYNKPSSKTHKPNSSS) is disordered. The span at 11 to 36 (ASSSSPASPSYYNKPSSKTHKPNSSS) shows a compositional bias: low complexity. A helical; Signal-anchor for type II membrane protein membrane pass occupies residues 46-66 (VAIIFFSLVSVFIGVAGTIFA). Asn-291 carries an N-linked (GlcNAc...) asparagine glycan.

Belongs to the glycosyltransferase 31 family. Mn(2+) is required as a cofactor.

It is found in the golgi apparatus membrane. It functions in the pathway protein modification; protein glycosylation. In terms of biological role, beta-1,3-galactosyltransferase that transfers galactose from UDP-galactose to substrates with a terminal glycosyl residue. This Arabidopsis thaliana (Mouse-ear cress) protein is Probable beta-1,3-galactosyltransferase 12 (B3GALT12).